The chain runs to 141 residues: Hemoglobin subunit alpha-1 (141 aa).

The Globin domain occupies Val-1 to Arg-141. His-58 serves as a coordination point for O2. His-87 serves as a coordination point for heme b.

It belongs to the globin family. In terms of assembly, heterotetramer of two alpha chains and two beta chains. As to expression, red blood cells.

Involved in oxygen transport from the lung to the various peripheral tissues. The sequence is that of Hemoglobin subunit alpha-1 from Stercorarius maccormicki (South polar skua).